Reading from the N-terminus, the 157-residue chain is Small ribosomal subunit protein uS7 (157 aa).

This sequence belongs to the universal ribosomal protein uS7 family. In terms of assembly, part of the 30S ribosomal subunit. Contacts proteins S9 and S11.

Functionally, one of the primary rRNA binding proteins, it binds directly to 16S rRNA where it nucleates assembly of the head domain of the 30S subunit. Is located at the subunit interface close to the decoding center, probably blocks exit of the E-site tRNA. The sequence is that of Small ribosomal subunit protein uS7 from Salinibacter ruber (strain DSM 13855 / M31).